A 167-amino-acid chain; its full sequence is uncharacterized protein (167 aa).

A helical membrane pass occupies residues 4–24 (IIGLFFIIILIVINISILAYD).

It localises to the membrane. This is an uncharacterized protein from Rickettsia prowazekii (strain Madrid E).